The primary structure comprises 117 residues: Large ribosomal subunit protein eL34 (117 aa).

Ser-12 is modified (phosphoserine). An N6-acetyllysine mark is found at Lys-36 and Lys-43. Lys-108 participates in a covalent cross-link: Glycyl lysine isopeptide (Lys-Gly) (interchain with G-Cter in SUMO2).

It belongs to the eukaryotic ribosomal protein eL34 family. Component of the large ribosomal subunit.

It is found in the cytoplasm. Its subcellular location is the cytosol. The protein localises to the endoplasmic reticulum. Functionally, component of the large ribosomal subunit. The ribosome is a large ribonucleoprotein complex responsible for the synthesis of proteins in the cell. The chain is Large ribosomal subunit protein eL34 (Rpl34) from Rattus norvegicus (Rat).